The sequence spans 501 residues: Ribose import ATP-binding protein RbsA (501 aa).

ABC transporter domains lie at 5 to 241 (LQLK…VGRK) and 252 to 495 (APGE…VGKL). 37–44 (GENGAGKS) provides a ligand contact to ATP.

The protein belongs to the ABC transporter superfamily. Ribose importer (TC 3.A.1.2.1) family. The complex is composed of an ATP-binding protein (RbsA), two transmembrane proteins (RbsC) and a solute-binding protein (RbsB).

The protein localises to the cell inner membrane. The catalysed reaction is D-ribose(out) + ATP + H2O = D-ribose(in) + ADP + phosphate + H(+). Its function is as follows. Part of the ABC transporter complex RbsABC involved in ribose import. Responsible for energy coupling to the transport system. The protein is Ribose import ATP-binding protein RbsA of Salmonella typhi.